Here is a 494-residue protein sequence, read N- to C-terminus: Glutamyl-tRNA(Gln) amidotransferase subunit A (494 aa).

Catalysis depends on charge relay system residues K88 and S163. Catalysis depends on S187, which acts as the Acyl-ester intermediate.

Belongs to the amidase family. GatA subfamily. In terms of assembly, heterotrimer of A, B and C subunits.

The enzyme catalyses L-glutamyl-tRNA(Gln) + L-glutamine + ATP + H2O = L-glutaminyl-tRNA(Gln) + L-glutamate + ADP + phosphate + H(+). Functionally, allows the formation of correctly charged Gln-tRNA(Gln) through the transamidation of misacylated Glu-tRNA(Gln) in organisms which lack glutaminyl-tRNA synthetase. The reaction takes place in the presence of glutamine and ATP through an activated gamma-phospho-Glu-tRNA(Gln). The chain is Glutamyl-tRNA(Gln) amidotransferase subunit A from Corynebacterium diphtheriae (strain ATCC 700971 / NCTC 13129 / Biotype gravis).